Consider the following 389-residue polypeptide: F-box protein At3g19880 (389 aa).

An F-box domain is found at 2–49 (TMMSDLTQDLVEEILSRVPITSLGAVRSTCKGWNALSKERILCIGEPK).

The polypeptide is F-box protein At3g19880 (Arabidopsis thaliana (Mouse-ear cress)).